The primary structure comprises 531 residues: MSVDPKKLNKEVAKRRTFAIISHPDAGKTTMTEKLLLWGQAIQVVGEVKGRKTDRHATSDWMSMEQERGISITTSVMQFPYQEHVVNLLDTPGHADFSEDTYRTLTAVDSALMMVDGAKGVEERTIKLMEVCRMRDTPIISFVNKLDRQIREPLELLSEIEAVLKIKCIPITWPIGMGQDFVGVYHLTENKTYFYEKGRGGEMTVSETREGYDYPDIRERLGALMFASFEESLELVQMALEDFDVDEFLAGEMTPVLFGTALGNFGVNMVLDTLIKYSPPPKAHPTNEREVAATETTFSGFVFKIQANMDPRHRDRIAFLRVCSGKYEKGMKLKHVRLGKDVRIADALTFLAGDRAALEEAYPGDIIGLHNHGTISIGDSFTEGEELNFTGIPHFAPELFRRVILKDPLKSKALQKGLQQLSEEGATQVFMPQINNDLILGAVGVLQFEVVAHRLKEEYKVQCIFEPVSIATVRWIHCDDEVALAKFKRKAHDQLSLDGGGHLTYLAPSRVNLQLMQDRYPEVTFSNTREH.

Residues 13–282 enclose the tr-type G domain; it reads AKRRTFAIIS…TLIKYSPPPK (270 aa). GTP-binding positions include 22–29, 90–94, and 144–147; these read SHPDAGKT, DTPGH, and NKLD.

The protein belongs to the TRAFAC class translation factor GTPase superfamily. Classic translation factor GTPase family. PrfC subfamily.

The protein localises to the cytoplasm. Increases the formation of ribosomal termination complexes and stimulates activities of RF-1 and RF-2. It binds guanine nucleotides and has strong preference for UGA stop codons. It may interact directly with the ribosome. The stimulation of RF-1 and RF-2 is significantly reduced by GTP and GDP, but not by GMP. This chain is Peptide chain release factor 3, found in Psychrobacter arcticus (strain DSM 17307 / VKM B-2377 / 273-4).